Reading from the N-terminus, the 234-residue chain is 2-C-methyl-D-erythritol 4-phosphate cytidylyltransferase (234 aa).

It belongs to the IspD/TarI cytidylyltransferase family. IspD subfamily.

It carries out the reaction 2-C-methyl-D-erythritol 4-phosphate + CTP + H(+) = 4-CDP-2-C-methyl-D-erythritol + diphosphate. Its pathway is isoprenoid biosynthesis; isopentenyl diphosphate biosynthesis via DXP pathway; isopentenyl diphosphate from 1-deoxy-D-xylulose 5-phosphate: step 2/6. Its function is as follows. Catalyzes the formation of 4-diphosphocytidyl-2-C-methyl-D-erythritol from CTP and 2-C-methyl-D-erythritol 4-phosphate (MEP). This Syntrophus aciditrophicus (strain SB) protein is 2-C-methyl-D-erythritol 4-phosphate cytidylyltransferase.